The sequence spans 496 residues: Nucleolar and spindle-associated protein 1-B (496 aa).

Disordered regions lie at residues 44-206 (YPES…HEAH), 250-294 (TPVS…STAN), and 338-496 (KSSS…VPVK). The span at 56–69 (GCTSLTDTDELNSS) shows a compositional bias: polar residues. Over residues 121–134 (TQDKDCLESKKKEV) the composition is skewed to basic and acidic residues. The segment covering 150 to 159 (QDTSKQNNSE) has biased composition (polar residues). Residues 261–281 (SRLSLLSPLPRTTGASPSRTP) are compositionally biased toward low complexity. Polar residues-rich tracts occupy residues 376-396 (NTTI…NKAN) and 403-423 (AQNT…QASL). Residues 447-459 (SGSNSNVSVLKNN) are compositionally biased toward low complexity. The segment covering 467–485 (TREERRKQHELDRKGKRDQ) has biased composition (basic and acidic residues).

Belongs to the NUSAP family. As to quaternary structure, interacts with DNA, microtubules, ipo7, kpna2 and kpnb1. Microtubule stabilization is inhibited by ipo7 and kpna2, while microtubule bundling is inhibited by kpnb1. Active GTP-bound ran causes dissociation of ipo7 and kpnb1.

It is found in the cytoplasm. The protein resides in the nucleus. It localises to the cytoskeleton. The protein localises to the spindle. Functionally, microtubule-associated protein with the capacity to bundle and stabilize microtubules. May associate with chromosomes and promote the organization of meiotic or mitotic spindle microtubules around them. The protein is Nucleolar and spindle-associated protein 1-B (nusap1-b) of Xenopus laevis (African clawed frog).